Reading from the N-terminus, the 1453-residue chain is DNA-directed RNA polymerase IV subunit 1 (1453 aa).

Zn(2+)-binding residues include C56, C59, C67, H70, C97, C100, and C121. Residues D447, D449, and D451 each coordinate Mg(2+). The segment at P806–D818 is bridging helix.

It belongs to the RNA polymerase beta' chain family. Component of the RNA polymerase IV complex. Interacts with NRPD2, NRPD3, NRPD3B, NRPD4, NRPD5, NRPD5B, NRPD6A, NRPD7, NRPD7B, NRPD9A, NRPD9B, NRPD10, NRPD11, NRPD12, RDR2, RDM4, CLSY1, CLSY2, CLSY3, CLSY4 and SHH1. In terms of tissue distribution, mostly expressed in flowers, and, to a lower extent, in leaves.

The protein localises to the nucleus. It catalyses the reaction RNA(n) + a ribonucleoside 5'-triphosphate = RNA(n+1) + diphosphate. DNA-dependent RNA polymerase catalyzes the transcription of DNA into RNA using the four ribonucleoside triphosphates as substrates. Largest and catalytic component of RNA polymerase IV which mediates 24-nt short-interfering RNAs (siRNA) accumulation. Implicated in siRNA-directed heterochromatin formation through the action of DCL3 and AGO4, and subsequent DNA methylation-dependent silencing of targeted sequences. Essential component of a self-reinforcing loop coupling de novo DNA methylation to siRNA production. Required for intercellular but not intracellular RNA interference (RNAi) leading to systemic post-transcriptional gene silencing. Involved in the maintenance of post-transcriptional RNA silencing. The chain is DNA-directed RNA polymerase IV subunit 1 (NRPD1) from Arabidopsis thaliana (Mouse-ear cress).